We begin with the raw amino-acid sequence, 557 residues long: Formate--tetrahydrofolate ligase (557 aa).

66-73 lines the ATP pocket; the sequence is TPAGEGKS.

Belongs to the formate--tetrahydrofolate ligase family.

It catalyses the reaction (6S)-5,6,7,8-tetrahydrofolate + formate + ATP = (6R)-10-formyltetrahydrofolate + ADP + phosphate. It functions in the pathway one-carbon metabolism; tetrahydrofolate interconversion. In Clostridium botulinum (strain Kyoto / Type A2), this protein is Formate--tetrahydrofolate ligase.